Consider the following 177-residue polypeptide: Shikimate kinase (177 aa).

17-22 is a binding site for ATP; it reads GVGKTT. Thr21 serves as a coordination point for Mg(2+). 3 residues coordinate substrate: Asp39, Arg63, and Gly86. Position 125 (Arg125) interacts with ATP. Position 143 (Arg143) interacts with substrate. Arg159 provides a ligand contact to ATP.

Belongs to the shikimate kinase family. Monomer. Mg(2+) is required as a cofactor.

The protein resides in the cytoplasm. The enzyme catalyses shikimate + ATP = 3-phosphoshikimate + ADP + H(+). It functions in the pathway metabolic intermediate biosynthesis; chorismate biosynthesis; chorismate from D-erythrose 4-phosphate and phosphoenolpyruvate: step 5/7. Catalyzes the specific phosphorylation of the 3-hydroxyl group of shikimic acid using ATP as a cosubstrate. This chain is Shikimate kinase, found in Bacillus licheniformis (strain ATCC 14580 / DSM 13 / JCM 2505 / CCUG 7422 / NBRC 12200 / NCIMB 9375 / NCTC 10341 / NRRL NRS-1264 / Gibson 46).